Consider the following 312-residue polypeptide: Putative HTH-type transcriptional regulatory protein TV0294 (312 aa).

The 54-residue stretch at 133–186 (LRERRNELNLSIGNISSYLGVSRRSVSLYENGSAATIDIFIRLRNILKADIVDH) folds into the HTH cro/C1-type domain. Positions 144 to 163 (IGNISSYLGVSRRSVSLYEN) form a DNA-binding region, H-T-H motif.

The sequence is that of Putative HTH-type transcriptional regulatory protein TV0294 from Thermoplasma volcanium (strain ATCC 51530 / DSM 4299 / JCM 9571 / NBRC 15438 / GSS1).